An 885-amino-acid polypeptide reads, in one-letter code: Alanine--tRNA ligase (885 aa).

Over residues 426-444 (QEQKTRARQDRREKQRGGA) the composition is skewed to basic and acidic residues. The disordered stretch occupies residues 426–445 (QEQKTRARQDRREKQRGGAE). Zn(2+) contacts are provided by H568, H572, C671, and H675.

It belongs to the class-II aminoacyl-tRNA synthetase family. It depends on Zn(2+) as a cofactor.

The protein resides in the cytoplasm. It carries out the reaction tRNA(Ala) + L-alanine + ATP = L-alanyl-tRNA(Ala) + AMP + diphosphate. Catalyzes the attachment of alanine to tRNA(Ala) in a two-step reaction: alanine is first activated by ATP to form Ala-AMP and then transferred to the acceptor end of tRNA(Ala). Also edits incorrectly charged Ser-tRNA(Ala) and Gly-tRNA(Ala) via its editing domain. The chain is Alanine--tRNA ligase from Chlorobium phaeovibrioides (strain DSM 265 / 1930) (Prosthecochloris vibrioformis (strain DSM 265)).